A 317-amino-acid polypeptide reads, in one-letter code: Ribosomal RNA small subunit methyltransferase H (317 aa).

S-adenosyl-L-methionine contacts are provided by residues 37–39 (AGH), Asp56, Phe85, Asp106, and Gln113.

The protein belongs to the methyltransferase superfamily. RsmH family.

It is found in the cytoplasm. The enzyme catalyses cytidine(1402) in 16S rRNA + S-adenosyl-L-methionine = N(4)-methylcytidine(1402) in 16S rRNA + S-adenosyl-L-homocysteine + H(+). Its function is as follows. Specifically methylates the N4 position of cytidine in position 1402 (C1402) of 16S rRNA. The chain is Ribosomal RNA small subunit methyltransferase H from Lactococcus lactis subsp. cremoris (strain SK11).